The primary structure comprises 530 residues: Arginine--tRNA ligase (530 aa).

Residues 113–123 carry the 'HIGH' region motif; that stretch reads ANPTGPLHIGH.

The protein belongs to the class-I aminoacyl-tRNA synthetase family. As to quaternary structure, monomer.

It localises to the cytoplasm. The enzyme catalyses tRNA(Arg) + L-arginine + ATP = L-arginyl-tRNA(Arg) + AMP + diphosphate. The sequence is that of Arginine--tRNA ligase from Campylobacter jejuni subsp. doylei (strain ATCC BAA-1458 / RM4099 / 269.97).